A 309-amino-acid polypeptide reads, in one-letter code: uncharacterized protein (309 aa).

Residues 23–39 (RFNVAIIGGTGGLGRAI) form a helical membrane-spanning segment.

The protein belongs to the NmrA-type oxidoreductase family.

The protein localises to the membrane. This is an uncharacterized protein from Saccharomyces cerevisiae (strain ATCC 204508 / S288c) (Baker's yeast).